Consider the following 475-residue polypeptide: Putative aldehyde dehydrogenase SH0913 (475 aa).

201-207 provides a ligand contact to NAD(+); it reads GDGEGVG. Active-site residues include E245 and C279.

This sequence belongs to the aldehyde dehydrogenase family.

The enzyme catalyses an aldehyde + NAD(+) + H2O = a carboxylate + NADH + 2 H(+). This chain is Putative aldehyde dehydrogenase SH0913, found in Staphylococcus haemolyticus (strain JCSC1435).